Reading from the N-terminus, the 306-residue chain is Curved DNA-binding protein (306 aa).

Residues 5 to 69 (DYYAIMGVKP…QRRAEYDQLW (65 aa)) form the J domain.

The protein resides in the cytoplasm. It localises to the nucleoid. In terms of biological role, DNA-binding protein that preferentially recognizes a curved DNA sequence. It is probably a functional analog of DnaJ; displays overlapping activities with DnaJ, but functions under different conditions, probably acting as a molecular chaperone in an adaptive response to environmental stresses other than heat shock. Lacks autonomous chaperone activity; binds native substrates and targets them for recognition by DnaK. Its activity is inhibited by the binding of CbpM. This Salmonella arizonae (strain ATCC BAA-731 / CDC346-86 / RSK2980) protein is Curved DNA-binding protein.